The chain runs to 162 residues: Protein NrdI (162 aa).

Belongs to the NrdI family.

Its function is as follows. Probably involved in ribonucleotide reductase function. This Streptococcus pyogenes serotype M1 protein is Protein NrdI.